A 316-amino-acid chain; its full sequence is Ribonuclease Z (316 aa).

The Zn(2+) site is built by H59, H61, D63, H64, H135, D203, and H261. The Proton acceptor role is filled by D63.

It belongs to the RNase Z family. In terms of assembly, homodimer. Zn(2+) is required as a cofactor.

The enzyme catalyses Endonucleolytic cleavage of RNA, removing extra 3' nucleotides from tRNA precursor, generating 3' termini of tRNAs. A 3'-hydroxy group is left at the tRNA terminus and a 5'-phosphoryl group is left at the trailer molecule.. In terms of biological role, zinc phosphodiesterase, which displays some tRNA 3'-processing endonuclease activity. Probably involved in tRNA maturation, by removing a 3'-trailer from precursor tRNA. The chain is Ribonuclease Z from Nanoarchaeum equitans (strain Kin4-M).